The sequence spans 887 residues: Valine--tRNA ligase (887 aa).

A 'HIGH' region motif is present at residues 47–57; it reads PNVTGALHMGH. A 'KMSKS' region motif is present at residues 527–531; it reads KMSKS. Position 530 (Lys530) interacts with ATP. The stretch at 817–885 forms a coiled coil; it reads LVNVEEEEKR…LLASLEKIRK (69 aa).

Belongs to the class-I aminoacyl-tRNA synthetase family. ValS type 1 subfamily. Monomer.

Its subcellular location is the cytoplasm. The enzyme catalyses tRNA(Val) + L-valine + ATP = L-valyl-tRNA(Val) + AMP + diphosphate. Its function is as follows. Catalyzes the attachment of valine to tRNA(Val). As ValRS can inadvertently accommodate and process structurally similar amino acids such as threonine, to avoid such errors, it has a 'posttransfer' editing activity that hydrolyzes mischarged Thr-tRNA(Val) in a tRNA-dependent manner. The sequence is that of Valine--tRNA ligase from Geobacter sulfurreducens (strain ATCC 51573 / DSM 12127 / PCA).